Consider the following 430-residue polypeptide: Putative membrane fusion protein SilB (430 aa).

The N-terminal stretch at 1–28 is a signal peptide; it reads MASLKIKYAAIIISSLIAGGLISVTAWQ. The tract at residues 407–430 is disordered; that stretch reads RHPEKTENSMPAMSEQPVNMHSGH. The span at 414 to 430 shows a compositional bias: polar residues; it reads NSMPAMSEQPVNMHSGH.

The protein belongs to the membrane fusion protein (MFP) (TC 8.A.1) family.

Functionally, component of the sil cation efflux system that confers resistance to silver. May be part of a three-component cation/proton antiporter. This Salmonella typhimurium protein is Putative membrane fusion protein SilB (silB).